A 319-amino-acid polypeptide reads, in one-letter code: Type II methyltransferase M.RsrI (319 aa).

Over residues 1–10 (MANRSHHNAG) the composition is skewed to basic residues. Positions 1–32 (MANRSHHNAGHRAMNALRKSGQKHSSESQLGS) are disordered.

It belongs to the N(4)/N(6)-methyltransferase family.

It catalyses the reaction a 2'-deoxyadenosine in DNA + S-adenosyl-L-methionine = an N(6)-methyl-2'-deoxyadenosine in DNA + S-adenosyl-L-homocysteine + H(+). With respect to regulation, strongly inhibited by N-ethylmaleimide, inactivated by MgCl(2) or MgSO(4). Its function is as follows. A beta subtype methylase, recognizes the double-stranded sequence 5'-GAATTC-3', methylates A-3 on both strands, and protects the DNA from cleavage by the RsrI endonuclease. The chain is Type II methyltransferase M.RsrI from Cereibacter sphaeroides (Rhodobacter sphaeroides).